We begin with the raw amino-acid sequence, 685 residues long: Glycine--tRNA ligase beta subunit (685 aa).

It belongs to the class-II aminoacyl-tRNA synthetase family. In terms of assembly, tetramer of two alpha and two beta subunits.

The protein resides in the cytoplasm. It catalyses the reaction tRNA(Gly) + glycine + ATP = glycyl-tRNA(Gly) + AMP + diphosphate. The polypeptide is Glycine--tRNA ligase beta subunit (Azotobacter vinelandii (strain DJ / ATCC BAA-1303)).